Here is a 427-residue protein sequence, read N- to C-terminus: UPF0597 protein CD630_32320 (427 aa).

The protein belongs to the UPF0597 family.

The protein is UPF0597 protein CD630_32320 of Clostridioides difficile (strain 630) (Peptoclostridium difficile).